Reading from the N-terminus, the 88-residue chain is UPF0297 protein BLi02868/BL02032 (88 aa).

Belongs to the UPF0297 family.

This is UPF0297 protein BLi02868/BL02032 from Bacillus licheniformis (strain ATCC 14580 / DSM 13 / JCM 2505 / CCUG 7422 / NBRC 12200 / NCIMB 9375 / NCTC 10341 / NRRL NRS-1264 / Gibson 46).